The chain runs to 431 residues: Serine/threonine-protein kinase Sgk1 (431 aa).

Residues 1 to 60 are necessary for localization to the mitochondria; the sequence is MTVKTEAARGPLTYSRMRGMVAILIAFMKQRRMGLNDFIQKIANNSYACKHTEVQSILKI. Residues 66–92 form a disordered region; the sequence is PELMNANPSPPPSPSQQINLGPSSNPH. S74 is subject to Phosphoserine. Phosphoserine; by MAPK7 is present on S78. Residues 81 to 91 show a composition bias toward polar residues; sequence QQINLGPSSNP. Residues 98-355 form the Protein kinase domain; that stretch reads FHFLKVIGKG…FMEIRNHVFF (258 aa). Residues 104 to 112 and K127 contribute to the ATP site; that span reads IGKGSFGKV. The short motif at 131–141 is the Nuclear localization signal element; sequence KKAILKKKEEK. D222 serves as the catalytic Proton acceptor. At T256 the chain carries Phosphothreonine; by PDPK1. An AGC-kinase C-terminal domain is found at 356–431; sequence SLINWDDLIN…SYAPPMDSFL (76 aa). A Phosphothreonine; by PKA modification is found at T369. 3 positions are modified to phosphoserine: S397, S401, and S422.

The protein belongs to the protein kinase superfamily. AGC Ser/Thr protein kinase family. Homodimer; disulfide-linked. Forms a trimeric complex with FBXW7 and NOTCH1. Interacts with MAPK3/ERK1, MAPK1/ERK2, MAP2K1/MEK1, MAP2K2/MEK2, NEDD4, NEDD4L, MAPT/TAU, MAPK7, CREB1, SLC9A3R2/NHERF2 and KCNJ1/ROMK1. Associates with the mammalian target of rapamycin complex 2 (mTORC2) via an interaction with MAPKAP1/SIN1. In terms of processing, regulated by phosphorylation. Activated by phosphorylation on Ser-422 by mTORC2, transforming it into a substrate for PDPK1 which phosphorylates it on Thr-256. Phosphorylation on Ser-397 and Ser-401 are also essential for its activity. Phosphorylation on Ser-78 by MAPK7 is required for growth factor-induced cell cycle progression. Post-translationally, ubiquitinated by NEDD4L; which promotes proteasomal degradation. Ubiquitinated by SYVN1 at the endoplasmic reticulum; which promotes rapid proteasomal degradation and maintains a high turnover rate in resting cells.

Its subcellular location is the cytoplasm. The protein resides in the nucleus. It is found in the endoplasmic reticulum membrane. The protein localises to the cell membrane. It localises to the mitochondrion. It catalyses the reaction L-seryl-[protein] + ATP = O-phospho-L-seryl-[protein] + ADP + H(+). The enzyme catalyses L-threonyl-[protein] + ATP = O-phospho-L-threonyl-[protein] + ADP + H(+). Two specific sites, one in the kinase domain (Thr-256) and the other in the C-terminal regulatory region (Ser-422), need to be phosphorylated for its full activation. Phosphorylation at Ser-397 and Ser-401 are also essential for its activity. Activated by WNK1, WNK2, WNK3 and WNK4; which promote phosphorylation by mTORC2. Functionally, serine/threonine-protein kinase which is involved in the regulation of a wide variety of ion channels, membrane transporters, cellular enzymes, transcription factors, neuronal excitability, cell growth, proliferation, survival, migration and apoptosis. Plays an important role in cellular stress response. Contributes to regulation of renal Na(+) retention, renal K(+) elimination, salt appetite, gastric acid secretion, intestinal Na(+)/H(+) exchange and nutrient transport, insulin-dependent salt sensitivity of blood pressure, salt sensitivity of peripheral glucose uptake, cardiac repolarization and memory consolidation. Up-regulates Na(+) channels: SCNN1A/ENAC, SCN5A and ASIC1/ACCN2, K(+) channels: KCNJ1/ROMK1, KCNA1-5, KCNQ1-5 and KCNE1, epithelial Ca(2+) channels: TRPV5 and TRPV6, chloride channels: BSND, CLCN2 and CFTR, glutamate transporters: SLC1A3/EAAT1, SLC1A2 /EAAT2, SLC1A1/EAAT3, SLC1A6/EAAT4 and SLC1A7/EAAT5, amino acid transporters: SLC1A5/ASCT2, SLC38A1/SN1 and SLC6A19, creatine transporter: SLC6A8, Na(+)/dicarboxylate cotransporter: SLC13A2/NADC1, Na(+)-dependent phosphate cotransporter: SLC34A2/NAPI-2B, glutamate receptor: GRIK2/GLUR6. Up-regulates carriers: SLC9A3/NHE3, SLC12A1/NKCC2, SLC12A3/NCC, SLC5A3/SMIT, SLC2A1/GLUT1, SLC5A1/SGLT1 and SLC15A2/PEPT2. Regulates enzymes: GSK3A/B, PMM2 and Na(+)/K(+) ATPase, and transcription factors: CTNNB1 and nuclear factor NF-kappa-B. Stimulates sodium transport into epithelial cells by enhancing the stability and expression of SCNN1A/ENAC. This is achieved by phosphorylating the NEDD4L ubiquitin E3 ligase, promoting its interaction with 14-3-3 proteins, thereby preventing it from binding to SCNN1A/ENAC and targeting it for degradation. Regulates store-operated Ca(+2) entry (SOCE) by stimulating ORAI1 and STIM1. Regulates KCNJ1/ROMK1 directly via its phosphorylation or indirectly via increased interaction with SLC9A3R2/NHERF2. Phosphorylates MDM2 and activates MDM2-dependent ubiquitination of p53/TP53. Phosphorylates MAPT/TAU and mediates microtubule depolymerization and neurite formation in hippocampal neurons. Phosphorylates SLC2A4/GLUT4 and up-regulates its activity. Phosphorylates APBB1/FE65 and promotes its localization to the nucleus. Phosphorylates MAPK1/ERK2 and activates it by enhancing its interaction with MAP2K1/MEK1 and MAP2K2/MEK2. Phosphorylates FBXW7 and plays an inhibitory role in the NOTCH1 signaling. Phosphorylates FOXO1 resulting in its relocalization from the nucleus to the cytoplasm. Phosphorylates FOXO3, promoting its exit from the nucleus and interference with FOXO3-dependent transcription. Phosphorylates BRAF and MAP3K3/MEKK3 and inhibits their activity. Phosphorylates SLC9A3/NHE3 in response to dexamethasone, resulting in its activation and increased localization at the cell membrane. Phosphorylates CREB1. Necessary for vascular remodeling during angiogenesis. This Oryctolagus cuniculus (Rabbit) protein is Serine/threonine-protein kinase Sgk1 (SGK1).